Here is a 49-residue protein sequence, read N- to C-terminus: Large ribosomal subunit protein bL33B (49 aa).

This sequence belongs to the bacterial ribosomal protein bL33 family.

This chain is Large ribosomal subunit protein bL33B, found in Bacillus velezensis (strain DSM 23117 / BGSC 10A6 / LMG 26770 / FZB42) (Bacillus amyloliquefaciens subsp. plantarum).